A 260-amino-acid chain; its full sequence is Phosphate import ATP-binding protein PstB (260 aa).

The region spanning 14-255 (VQVKNLAFYY…PRNKQTEDYI (242 aa)) is the ABC transporter domain. Residue 46 to 53 (GPSGCGKS) coordinates ATP.

It belongs to the ABC transporter superfamily. Phosphate importer (TC 3.A.1.7) family. As to quaternary structure, the complex is composed of two ATP-binding proteins (PstB), two transmembrane proteins (PstC and PstA) and a solute-binding protein (PstS).

Its subcellular location is the cell inner membrane. It carries out the reaction phosphate(out) + ATP + H2O = ADP + 2 phosphate(in) + H(+). Functionally, part of the ABC transporter complex PstSACB involved in phosphate import. Responsible for energy coupling to the transport system. The sequence is that of Phosphate import ATP-binding protein PstB from Syntrophotalea carbinolica (strain DSM 2380 / NBRC 103641 / GraBd1) (Pelobacter carbinolicus).